A 284-amino-acid polypeptide reads, in one-letter code: Nucleotide-binding protein SO_3964 (284 aa).

ATP is bound at residue 8–15 (GRSGSGKS). Position 56-59 (56-59 (DVRN)) interacts with GTP.

The protein belongs to the RapZ-like family.

In terms of biological role, displays ATPase and GTPase activities. The polypeptide is Nucleotide-binding protein SO_3964 (Shewanella oneidensis (strain ATCC 700550 / JCM 31522 / CIP 106686 / LMG 19005 / NCIMB 14063 / MR-1)).